Consider the following 341-residue polypeptide: Small ribosomal subunit biogenesis GTPase RsgA (341 aa).

The 157-residue stretch at 112-268 folds into the CP-type G domain; it reads RQQLIAANLD…LIDTPGMREL (157 aa). GTP-binding positions include 157-160 and 210-218; these read TKVD and GSSGAGKST. Zn(2+) is bound by residues cysteine 290, cysteine 295, histidine 297, and cysteine 303.

The protein belongs to the TRAFAC class YlqF/YawG GTPase family. RsgA subfamily. In terms of assembly, monomer. Associates with 30S ribosomal subunit, binds 16S rRNA. Zn(2+) serves as cofactor.

Its subcellular location is the cytoplasm. One of several proteins that assist in the late maturation steps of the functional core of the 30S ribosomal subunit. Helps release RbfA from mature subunits. May play a role in the assembly of ribosomal proteins into the subunit. Circularly permuted GTPase that catalyzes slow GTP hydrolysis, GTPase activity is stimulated by the 30S ribosomal subunit. This chain is Small ribosomal subunit biogenesis GTPase RsgA, found in Xylella fastidiosa (strain Temecula1 / ATCC 700964).